The sequence spans 348 residues: Serpentine receptor class alpha-29 (348 aa).

6 helical membrane-spanning segments follow: residues 28–48, 108–130, 145–165, 193–213, 246–266, and 280–300; these read FILMIIVVSFITTALAVQTLW, FLYYQTALFSSFYCVSLFLDRLF, GFIVFLILQIICPIAIQFWTF, INDSRIIIMGTIFMCSLFLYI, CIIIFSQITCLGITSFVPSIF, and LILAFMAGATYSNFFLPLIVI.

The protein belongs to the nematode receptor-like protein sra family.

It localises to the membrane. The sequence is that of Serpentine receptor class alpha-29 (sra-29) from Caenorhabditis elegans.